The primary structure comprises 442 residues: Terpene cyclase aneC (442 aa).

Mg(2+) contacts are provided by Asp196, Asn327, Ser331, and Glu335. Arg419 and Tyr420 together coordinate (2E,6E)-farnesyl diphosphate.

This sequence belongs to the terpene synthase family. Homodimer. The cofactor is Mg(2+).

It carries out the reaction (2E,6E)-farnesyl diphosphate = dauca-4,7-diene + diphosphate. It participates in secondary metabolite biosynthesis. Its function is as follows. Terpene cyclase; part of the gene cluster that mediates the biosynthesis of aculenes, a unique type of norsesquiterpenes that contain a nordaucane skeleton linked to an L-proline moiety and are of mixed biosynthetic origin. The pathway begins with the synthesis of dauca-4,7-diene by the terpene cyclase aneC using farnesyl pyrophosphate (FPP) as substrate. The cytochrome P450 monooxygenase aneF then performs the initial oxidation at C-12 of dauca-4,7-diene to yield asperaculane D. Asperaculane D is substrate of the cytochrome P450 monooxygenase aneD for C-10 hydroxylation to yield asperaculane E. The cytochrome P450 monooxygenase aneG then converts asperaculane E into aculene D via C-2 oxidation. The monomodular nonribosomal peptide synthtase aneB adenylates L-proline and the thiohydrolase aneE transfers this activated L-proline derivative to aculenes D and C to produce respectively aculenes B and A. The dioxygenase aneA converts aculene D into aculene C, and aculene B into aculene A by introducing the 5,6-alkene moiety. Asperculanes A, B, C and F, as well as 14-prolyl asperculane C, might be shunt products of the pathway. This chain is Terpene cyclase aneC, found in Aspergillus aculeatus (strain ATCC 16872 / CBS 172.66 / WB 5094).